A 325-amino-acid chain; its full sequence is Eukaryotic translation initiation factor 3 subunit I (325 aa).

WD repeat units follow at residues 8 to 47, 50 to 91, 144 to 183, 186 to 225, and 283 to 324; these read GHER…RLGT, GHTG…ALLQ, CSES…IVNS, EHSK…HQKT, and GHFG…FEFE.

This sequence belongs to the eIF-3 subunit I family. As to quaternary structure, component of the eukaryotic translation initiation factor 3 (eIF-3) complex, which is composed of 13 subunits: eif3a, eif3b, eif3c, eif3d, eif3e, eif3f, eif3g, eif3h, eif3i, eif3j, eif3k, eif3l and eif3m.

The protein resides in the cytoplasm. In terms of biological role, component of the eukaryotic translation initiation factor 3 (eIF-3) complex, which is involved in protein synthesis of a specialized repertoire of mRNAs and, together with other initiation factors, stimulates binding of mRNA and methionyl-tRNAi to the 40S ribosome. The eIF-3 complex specifically targets and initiates translation of a subset of mRNAs involved in cell proliferation. The chain is Eukaryotic translation initiation factor 3 subunit I (eif3i) from Xenopus laevis (African clawed frog).